A 979-amino-acid chain; its full sequence is MSPLKIYGPIRIRSMQTGITKWKEGSFEIVEKDNRVSLLVHYNTGGIPRVFQLSHNIKNVVLRPSGIKQSRLMLTLQDNSFLSIDKVPSKDAEEMRLFLDAVHQNRLHAAMKASQGSGSFGTILGSRTSQKETNRQLSYSDNQASSKRGSLETKDEIPFRKVLGSPGRGPIKTVTGGGMAVTRTIPSLTLTSTPLRSGLLENRTEKRKRMLSGSELTEDYPKENDSSSNNKAMTDPSRKYLTSCREKQLSLKQAEENRTSGLLPLQSSSFYGSRAGSKDYSSGVTNLDRCNVSSQTPSAKRSLGFLPQPTPLSVKKLRCNQDYAGWNRPRVPLSSHQQQLQGFSNLGNTCYMNAILQSLFSLQSFANDLLKQSIPWKKIPFNALIRRFANLLIKKDICNSETKKELLKKVKNAISATAERFSGYVQNDAHEFLSQCLDQLKEDMEKLNKTWKTEPVLGEENLPDTSATKVFTCPVITNLEFEVQHSIICKACGETIPKREQFNDLSIDLPRRKKPLPPRSIQDSLDLFFRAEELEYSCEKCGGKCALVRHKFNRLPRVLILHLKRYSFNVALSLNNKLGQQVIIPRFLTLASHCTESTKPPVTLGWSAPVAISRPLRACQMMNSCITSPSAPSKKFTFKSKSSVTSCLDSDSEDELKRSVVLSQRLCDLPGNEQYQEDVEKDLKLCRLEPGKAELENSGFDRMSEEEVLAAVLEISRREASPVLSPEDDDKPTSSPDTGFAEDDIPEMPENPDAMEIEKSKTITEPGPASFTEITKDCDENKENKTPEGSQGEVDWLQQYDVDREREEQELQQALAQSLQEQEAWEQKEDDDLKRATELSLQEFNNSFLDSLGSDEDSGNEDVFDMEYTEAEAEELKRNAETGALPHSYRLISVVSHIGSTSSSGHYISDVYDIKKQAWFTYNDLEVSKIQEAAVQSDRDRSGYIFFYMHKEIFDELLETEKTSQALSMEVGRAARQAS.

The KEN box 1 motif lies at 32–34 (KDN). 2 consecutive short sequence motifs (D-box) follow at residues 71–79 (RLMLTLQDN) and 96–105 (RLFLDAVHQN). Residue serine 114 is modified to Phosphoserine. Disordered stretches follow at residues 116–178 (GSGS…TGGG) and 192–240 (STPL…SRKY). Over residues 135–148 (RQLSYSDNQASSKR) the composition is skewed to polar residues. Residues 149-159 (GSLETKDEIPF) are compositionally biased toward basic and acidic residues. A D-box 3 motif is present at residues 160–168 (RKVLGSPGR). Serine 212 bears the Phosphoserine mark. The KEN box 2 motif lies at 222–224 (KEN). Residues 341-951 (QGFSNLGNTC…SGYIFFYMHK (611 aa)) enclose the USP domain. Residue cysteine 350 is the Nucleophile of the active site. A Phosphoserine; by CDK2 modification is found at serine 628. Residues serine 650 and serine 652 each carry the phosphoserine modification. Positions 704-723 (SEEEVLAAVLEISRREASPV) constitute a UIM 1 domain. A disordered region spans residues 719 to 795 (EASPVLSPED…TPEGSQGEVD (77 aa)). The residue at position 770 (serine 770) is a Phosphoserine. Over residues 774 to 786 (ITKDCDENKENKT) the composition is skewed to basic and acidic residues. A KEN box 3 motif is present at residues 782–784 (KEN). 2 consecutive UIM domains span residues 806–825 (REEQ…QEAW) and 828–847 (KEDD…FNNS). Histidine 906 (proton acceptor) is an active-site residue.

It belongs to the peptidase C19 family. In terms of assembly, interacts with FZR1/CDH1. Interacts with CDT1. In terms of processing, polyubiquitinated via 'Lys-11'-linked ubiquitin by the APC(CDH1) complex during late mitosis, leading to its degradation. Able to mediate auto-deubiquitination. Post-translationally, phosphorylated at Ser-628 by CDK2 during G1/S phase but not during mitosis; phosphorylation at Ser-628 is required for deubiquitinase activity. Also polyubiquitinated during early G1 phase, without leading to degradation. Phosphorylated at Ser-114 by ATM following DNA damage, which in turn increases its deubiquitination activity towards BLM.

It is found in the nucleus. It localises to the chromosome. The enzyme catalyses Thiol-dependent hydrolysis of ester, thioester, amide, peptide and isopeptide bonds formed by the C-terminal Gly of ubiquitin (a 76-residue protein attached to proteins as an intracellular targeting signal).. Deubiquitinase that plays a role in different processes including cell cycle regulation, DNA replication or DNA damage response. Antagonizes the anaphase-promoting complex (APC/C) during G1/S transition by mediating deubiquitination of cyclin-A (CCNA1 and CCNA2), thereby promoting S phase entry. Specifically mediates deubiquitination of 'Lys-11'-linked polyubiquitin chains, a specific ubiquitin-linkage type mediated by the APC/C complex. Phosphorylation at Ser-628 during G1/S phase maximizes the deubiquitinase activity, leading to prevent degradation of cyclin-A (CCNA1 and CCNA2). Plays an important role in the regulation of DNA replication by stabilizing the licensing factor CDT1. Also plays an essential role beyond S-phase entry to promote the efficiency and fidelity of replication by deubiquitinating checkpoint kinase 1/CHK1, promoting its stability. Sustains the DNA damage response (DDR) by deubiquitinating and stabilizing the ATP-dependent DNA helicase BLM. Mechanistically, DNA double-strand breaks (DSB) promotes ATM-mediated phosphorylation of USP37 and enhances the binding between USP37 and BLM. Promotes cell migration by deubiquitinating and stabilizing the epithelial-mesenchymal transition (EMT)-inducing transcription factor SNAI. Plays a role in the regulation of mitotic spindle assembly and mitotic progression by associating with chromatin-associated WAPL and stabilizing it through deubiquitination. This chain is Ubiquitin carboxyl-terminal hydrolase 37, found in Mus musculus (Mouse).